The chain runs to 230 residues: Urease accessory protein UreF (230 aa).

The protein belongs to the UreF family. As to quaternary structure, ureD, UreF and UreG form a complex that acts as a GTP-hydrolysis-dependent molecular chaperone, activating the urease apoprotein by helping to assemble the nickel containing metallocenter of UreC. The UreE protein probably delivers the nickel.

The protein resides in the cytoplasm. In terms of biological role, required for maturation of urease via the functional incorporation of the urease nickel metallocenter. This Cupriavidus taiwanensis (strain DSM 17343 / BCRC 17206 / CCUG 44338 / CIP 107171 / LMG 19424 / R1) (Ralstonia taiwanensis (strain LMG 19424)) protein is Urease accessory protein UreF.